The chain runs to 432 residues: UDP-N-acetylmuramate--L-alanine ligase (432 aa).

108–114 (GAHGKTS) is an ATP binding site.

Belongs to the MurCDEF family.

The protein localises to the cytoplasm. The catalysed reaction is UDP-N-acetyl-alpha-D-muramate + L-alanine + ATP = UDP-N-acetyl-alpha-D-muramoyl-L-alanine + ADP + phosphate + H(+). Its pathway is cell wall biogenesis; peptidoglycan biosynthesis. Functionally, cell wall formation. The sequence is that of UDP-N-acetylmuramate--L-alanine ligase from Bacillus licheniformis (strain ATCC 14580 / DSM 13 / JCM 2505 / CCUG 7422 / NBRC 12200 / NCIMB 9375 / NCTC 10341 / NRRL NRS-1264 / Gibson 46).